We begin with the raw amino-acid sequence, 77 residues long: U8-lycotoxin-Ls1l (77 aa).

A signal peptide spans 1-20 (MKLMIFTGLVLFAIVSLIEA). Positions 21-26 (QAENEK) are excised as a propeptide.

This sequence belongs to the neurotoxin 19 (CSTX) family. 08 (U8-Lctx) subfamily. Contains 4 disulfide bonds. As to expression, expressed by the venom gland.

Its subcellular location is the secreted. The chain is U8-lycotoxin-Ls1l from Lycosa singoriensis (Wolf spider).